The following is a 293-amino-acid chain: 4-hydroxy-tetrahydrodipicolinate synthase (293 aa).

Thr45 is a pyruvate binding site. Catalysis depends on Tyr133, which acts as the Proton donor/acceptor. The active-site Schiff-base intermediate with substrate is the Lys161. Pyruvate is bound at residue Ile203.

The protein belongs to the DapA family. In terms of assembly, homotetramer; dimer of dimers.

It localises to the cytoplasm. It carries out the reaction L-aspartate 4-semialdehyde + pyruvate = (2S,4S)-4-hydroxy-2,3,4,5-tetrahydrodipicolinate + H2O + H(+). The protein operates within amino-acid biosynthesis; L-lysine biosynthesis via DAP pathway; (S)-tetrahydrodipicolinate from L-aspartate: step 3/4. Functionally, catalyzes the condensation of (S)-aspartate-beta-semialdehyde [(S)-ASA] and pyruvate to 4-hydroxy-tetrahydrodipicolinate (HTPA). The polypeptide is 4-hydroxy-tetrahydrodipicolinate synthase (Aliivibrio fischeri (strain ATCC 700601 / ES114) (Vibrio fischeri)).